We begin with the raw amino-acid sequence, 119 residues long: Ghilanten (119 aa).

At glutamine 1 the chain carries Pyrrolidone carboxylic acid. 10 disulfide bridges follow: cysteine 8–cysteine 19, cysteine 13–cysteine 26, cysteine 28–cysteine 48, cysteine 33–cysteine 51, cysteine 37–cysteine 53, cysteine 62–cysteine 73, cysteine 67–cysteine 80, cysteine 82–cysteine 103, cysteine 88–cysteine 106, and cysteine 92–cysteine 108. Positions 28 to 53 (CPEVRCRVYCSHGFQRSRYGCEVCRC) constitute an Antistasin-like 1 domain. One can recognise an Antistasin-like 2 domain in the interval 83 to 108 (KIDINCRKTCPNGLKRDKLGCEYCEC). Residues 97–100 (KRDK) and 111–118 (KRKLVPRL) each bind heparin.

The protein belongs to the protease inhibitor I15 (antistasin) family.

The protein localises to the secreted. This highly disulfide-bonded protein is a potent inhibitor of factor Xa. May have therapeutic utility as an anticoagulant. Also exhibits a strong metastatic activity. The polypeptide is Ghilanten (Haementeria ghilianii (Amazon leech)).